Consider the following 490-residue polypeptide: Probable cytosol aminopeptidase (490 aa).

2 residues coordinate Mn(2+): K257 and D262. K269 is an active-site residue. 3 residues coordinate Mn(2+): D281, D341, and E343. R345 is a catalytic residue.

This sequence belongs to the peptidase M17 family. Mn(2+) is required as a cofactor.

It is found in the cytoplasm. It carries out the reaction Release of an N-terminal amino acid, Xaa-|-Yaa-, in which Xaa is preferably Leu, but may be other amino acids including Pro although not Arg or Lys, and Yaa may be Pro. Amino acid amides and methyl esters are also readily hydrolyzed, but rates on arylamides are exceedingly low.. The catalysed reaction is Release of an N-terminal amino acid, preferentially leucine, but not glutamic or aspartic acids.. In terms of biological role, presumably involved in the processing and regular turnover of intracellular proteins. Catalyzes the removal of unsubstituted N-terminal amino acids from various peptides. The protein is Probable cytosol aminopeptidase of Prochlorococcus marinus (strain AS9601).